The primary structure comprises 79 residues: UPF0180 protein Bcer98_1118 (79 aa).

This sequence belongs to the UPF0180 family.

The polypeptide is UPF0180 protein Bcer98_1118 (Bacillus cytotoxicus (strain DSM 22905 / CIP 110041 / 391-98 / NVH 391-98)).